The following is a 760-amino-acid chain: MAGQQFQYDDSGNTFFYFLTSFVGLIVIPATYYLWPRDQNAEQIRLKNIRKVYGRCMWYRLRLLKPQPNIIPTVKKIVLLAGWALFLFLAYKVSKTDREYQEYNPYEVLNLDPGATVAEIKKQYRLLSLKYHPDKGGDEVMFMRIAKAYAALTDEESRKNWEEFGNPDGPQATSFGIALPAWIVDQKNSILVLLVYGLAFMVILPVVVGSWWYRSIRYSGDQILIRTTQIYTYFVYKTRNMDMKRLIMVLAGASEFDPQYNKDATSRPTDNILIPQLIREIGSINLKKNEPPLTCPYSLKARVLLLSHLARMKIPETLEEDQQFMLKKCPALLQEMVNVICQLIVMARNREEREFRAPTLASLENCMKLSQMAVQGLQQFKSPLLQLPHIEEDNLRRVSNHKKYKIKTIQDLVSLKESDRHTLLHFLEDEKYEEVMAVLGSFPYVTMDIKSQVLDDEDSNNITVGSLVTVLVKLTRQTMAEVFEKEQSICAAEEQPAEDGQGETNKNRTKGGWQQKSKGPKKTAKSKKKKPLKKKPTPVLLPQSKQQKQKQANGVVGNEAAVKEDEEEVSDKGSDSEEEETNRDSQSEKDDGSDRDSDREQDEKQNKDDEAEWQELQQSIQRKERALLETKSKITHPVYSLYFPEEKQEWWWLYIADRKEQTLISMPYHVCTLKDTEEVELKFPAPGKPGNYQYTVFLRSDSYMGLDQIKPLKLEVHEAKPVPENHPQWDTAIEGDEDQEDSEGFEDSFEEEEEEEEDDD.

The Lumenal segment spans residues 1 to 14; it reads MAGQQFQYDDSGNT. Residues 15 to 35 traverse the membrane as a helical segment; that stretch reads FFYFLTSFVGLIVIPATYYLW. Topologically, residues 36–69 are cytoplasmic; it reads PRDQNAEQIRLKNIRKVYGRCMWYRLRLLKPQPN. Residues 70 to 90 form a helical membrane-spanning segment; it reads IIPTVKKIVLLAGWALFLFLA. Over 91–188 the chain is Lumenal; the sequence is YKVSKTDREY…LPAWIVDQKN (98 aa). The 62-residue stretch at 104-165 folds into the J domain; the sequence is NPYEVLNLDP…ESRKNWEEFG (62 aa). Residues 189–209 form a helical membrane-spanning segment; sequence SILVLLVYGLAFMVILPVVVG. An SEC63 1 domain is found at 197–541; sequence GLAFMVILPV…LKKKPTPVLL (345 aa). At 210 to 760 the chain is on the cytoplasmic side; sequence SWWYRSIRYS…EEEEEEEDDD (551 aa). Residues 492 to 617 form a disordered region; the sequence is AEEQPAEDGQ…DDEAEWQELQ (126 aa). Residues 518 to 536 are compositionally biased toward basic residues; sequence KGPKKTAKSKKKKPLKKKP. Position 537 is a phosphothreonine (Thr-537). A compositionally biased stretch (basic and acidic residues) spans 582–608; it reads NRDSQSEKDDGSDRDSDREQDEKQNKD. Positions 597 to 635 form a coiled coil; the sequence is SDREQDEKQNKDDEAEWQELQQSIQRKERALLETKSKIT. Residues 637-714 enclose the SEC63 2 domain; the sequence is PVYSLYFPEE…GLDQIKPLKL (78 aa). Residues 720–760 are disordered; sequence KPVPENHPQWDTAIEGDEDQEDSEGFEDSFEEEEEEEEDDD. Residues 733–760 are compositionally biased toward acidic residues; sequence IEGDEDQEDSEGFEDSFEEEEEEEEDDD. Phosphoserine is present on residues Ser-742 and Ser-748.

The ER translocon complex consists of channel-forming core components SEC61A1, SEC61B and SEC61G and different auxiliary components such as SEC62 and SEC63. Widely expressed, with high levels in the liver.

The protein localises to the endoplasmic reticulum membrane. In terms of biological role, mediates cotranslational and post-translational transport of certain precursor polypeptides across endoplasmic reticulum (ER). Proposed to play an auxiliary role in recognition of precursors with short and apolar signal peptides. May cooperate with SEC62 and HSPA5/BiP to facilitate targeting of small presecretory proteins into the SEC61 channel-forming translocon complex, triggering channel opening for polypeptide translocation to the ER lumen. Required for efficient PKD1/Polycystin-1 biogenesis and trafficking to the plasma membrane of the primary cilia. The sequence is that of Translocation protein SEC63 homolog from Homo sapiens (Human).